The primary structure comprises 238 residues: Endothelial protein C receptor (238 aa).

The first 17 residues, 1-17 (MLTTLLPILLLSGWAFC), serve as a signal peptide directing secretion. At 18–210 (SQDASDGLQR…GSQTSRSYTS (193 aa)) the chain is on the extracellular side. N47, N64, N136, and N172 each carry an N-linked (GlcNAc...) asparagine glycan. Cysteines 118 and 186 form a disulfide. Residues 211–231 (LVLGVLVGSFIIAGVAVGIFL) form a helical membrane-spanning segment. Residues 232-238 (CTGGRRC) are Cytoplasmic-facing.

In terms of processing, N-glycosylated. A soluble form exists; probably released by a metalloprotease. Seems to have the same activity as the membrane-bound form. In terms of tissue distribution, expressed strongly in the endothelial cells of arteries and veins in heart and lung, less intensely in capillaries in the lung and skin, and not at all in the endothelium of small vessels of the liver and kidney.

Its subcellular location is the membrane. Its function is as follows. Binds activated protein C. Enhances protein C activation by the thrombin-thrombomodulin complex; plays a role in the protein C pathway controlling blood coagulation. The protein is Endothelial protein C receptor (PROCR) of Homo sapiens (Human).